The primary structure comprises 99 residues: Large ribosomal subunit protein uL23 (99 aa).

Belongs to the universal ribosomal protein uL23 family. As to quaternary structure, part of the 50S ribosomal subunit. Contacts protein L29, and trigger factor when it is bound to the ribosome.

One of the early assembly proteins it binds 23S rRNA. One of the proteins that surrounds the polypeptide exit tunnel on the outside of the ribosome. Forms the main docking site for trigger factor binding to the ribosome. This Synechococcus sp. (strain JA-2-3B'a(2-13)) (Cyanobacteria bacterium Yellowstone B-Prime) protein is Large ribosomal subunit protein uL23.